The sequence spans 711 residues: MDIEDEENMSSSSIDVKENRNLDNMPPKDSSTPGPGEGIPLSNGGGGSTSRKRPLEEGSNGHSKYRLKKRRKTPGPVLPKNALMQLNEIKPGLQYMLLSQTGPVHAPLFVMSVEVNGQVFEGSGPTKKKAKLHAAEKALRSFVQFPNASEAHLAMGRTLSVNTDFTSDQADFPDTLFNGFETPDKSEPPFYVGSNGDDSFSSSGDVSLSASPVPASLTQPPLPIPPPFPPPSGKNPVMILNELRPGLKYDFLSESGESHAKSFVMSVVVDGQFFEGSGRNKKLAKARAAQSALATVFNLHLDQTPSRQPVLSEGLQLHLPQVLADAVSRLVLGKFSDLTDNFSSPHARRKVLSGVVMTTGTDVKDAKVISVSTGTKCINGEYMSDRGLALNDCHAEIISRRSLLRFLYAQLELYLNNKEDQKKSIFQKSERGGFRLKDTVQFHLYISTSPCGDARIFSPHEPVLEGMAPDSHQLTEPADRHPNRKARGQLRTKIESGEGTIPVRSNASIQTWDGVLQGERLLTMSCSDKIARWNVVGIQGALLSIFVEPIYFSSIILGSLYHGDHLSRAMYQRISNIEDLPPLYTLNKPLLSGISNAEARQPGKAPNFSVNWTVGDTAIEVINATTGKDELGRPSRLCKHALYCRWMRVHGKVPPHLLRTKITKPTTYHESKLAAKEYQAAKARLFTAFIKAGLGAWVEKPTEQDQFSFTP.

A disordered region spans residues 1 to 79 (MDIEDEENMS…RRKTPGPVLP (79 aa)). Residues 63 to 73 (SKYRLKKRRKT) show a composition bias toward basic residues. Residues 78–144 (LPKNALMQLN…AEKALRSFVQ (67 aa)) enclose the DRBM 1 domain. Interaction with substrate RNA regions lie at residues 83–88 (LMQLNE) and 104–105 (VH). The residue at position 149 (Ser-149) is a Phosphoserine. The segment at 176–220 (LFNGFETPDKSEPPFYVGSNGDDSFSSSGDVSLSASPVPASLTQP) is disordered. Over residues 192–213 (VGSNGDDSFSSSGDVSLSASPV) the composition is skewed to low complexity. In terms of domain architecture, DRBM 2 spans 231-298 (PSGKNPVMIL…AQSALATVFN (68 aa)). 2 interaction with substrate RNA regions span residues 237–242 (VMILNE) and His-259. An A to I editase domain is found at 370–707 (SVSTGTKCIN…VEKPTEQDQF (338 aa)). His-394 contacts Zn(2+). Glu-396 acts as the Proton donor in catalysis. Arg-400 and Arg-401 together coordinate 1D-myo-inositol hexakisphosphate. Residues Cys-451 and Cys-526 each coordinate Zn(2+). Positions 529, 532, 639, 672, 682, and 700 each coordinate 1D-myo-inositol hexakisphosphate.

In terms of assembly, homodimer. Homodimerization is essential for its catalytic activity. Can form heterodimers with isoform 5 of ADAR/ADAR1. 1D-myo-inositol hexakisphosphate is required as a cofactor. In terms of tissue distribution, brain and peripheral tissues.

Its subcellular location is the nucleus. The protein resides in the nucleolus. It carries out the reaction adenosine in double-stranded RNA + H2O + H(+) = inosine in double-stranded RNA + NH4(+). Catalyzes the hydrolytic deamination of adenosine to inosine in double-stranded RNA (dsRNA) referred to as A-to-I RNA editing. This may affect gene expression and function in a number of ways that include mRNA translation by changing codons and hence the amino acid sequence of proteins; pre-mRNA splicing by altering splice site recognition sequences; RNA stability by changing sequences involved in nuclease recognition; genetic stability in the case of RNA virus genomes by changing sequences during viral RNA replication; and RNA structure-dependent activities such as microRNA production or targeting or protein-RNA interactions. Can edit both viral and cellular RNAs and can edit RNAs at multiple sites (hyper-editing) or at specific sites (site-specific editing). Its cellular RNA substrates include: bladder cancer-associated protein (BLCAP), neurotransmitter receptors for glutamate (GRIA2 and GRIK2) and serotonin (HTR2C), GABA receptor (GABRA3) and potassium voltage-gated channel (KCNA1). Site-specific RNA editing of transcripts encoding these proteins results in amino acid substitutions which consequently alter their functional activities. Edits GRIA2 at both the Q/R and R/G sites efficiently but converts the adenosine in hotspot1 much less efficiently. Can inhibit cell proliferation and migration and can stimulate exocytosis. The chain is Double-stranded RNA-specific editase 1 (Adarb1) from Rattus norvegicus (Rat).